Reading from the N-terminus, the 241-residue chain is 3-oxoacyl-[acyl-carrier-protein] reductase FabG (241 aa).

NADP(+) contacts are provided by residues 13–16, Ser38, 57–58, and Asn83; these read GASG and EI. Ser135 contacts substrate. Residue Tyr148 is the Proton acceptor of the active site. NADP(+) is bound by residues 148–152 and Ile181; that span reads YCASK.

It belongs to the short-chain dehydrogenases/reductases (SDR) family. As to quaternary structure, homotetramer.

The enzyme catalyses a (3R)-hydroxyacyl-[ACP] + NADP(+) = a 3-oxoacyl-[ACP] + NADPH + H(+). Its pathway is lipid metabolism; fatty acid biosynthesis. Functionally, catalyzes the NADPH-dependent reduction of beta-ketoacyl-ACP substrates to beta-hydroxyacyl-ACP products, the first reductive step in the elongation cycle of fatty acid biosynthesis. The chain is 3-oxoacyl-[acyl-carrier-protein] reductase FabG (fabG) from Rickettsia felis (strain ATCC VR-1525 / URRWXCal2) (Rickettsia azadi).